The primary structure comprises 196 residues: Calcium channel flower (196 aa).

Helical transmembrane passes span 35 to 55 (LGIV…LSII), 70 to 92 (LAGF…QVGS), and 113 to 133 (AVPP…GLIF).

The protein belongs to the calcium channel flower family. As to quaternary structure, homomultimer. Associates with the dally/ magu complex.

Its subcellular location is the cell membrane. It is found in the cytoplasmic vesicle. It localises to the secretory vesicle. The protein localises to the synaptic vesicle membrane. The protein resides in the presynaptic cell membrane. Its subcellular location is the endosome. Channel activity is inhibited by La(3+), which reduces Ca(2+) influx and thus inhibits it's function in promoting activity-dependent bulk endocytosis (ADBE) in response to high stimuli. Its function is as follows. Transmembrane protein which mediates synaptic endocytosis, fitness-based cell culling, neuronal culling, morphogen gradient scaling, and calcium transport. Regulates synaptic endocytosis and hence couples exo- with endocytosis. Controls two major modes of synaptic vesicle (SV) endocytosis in the synaptic boutons of neuromuscular junctions (NMJs); Ca(2+) channel-independent Clathrin-mediated endocytosis (CME) in response to mild stimulation, and Ca(2+) channel-dependent activity-dependent bulk endocytosis (ADBE) in response to strong stimulation. Functions in ADBE and subsequent SV reformation from bulk endosomes by initiating Ca(2+) channel-dependent phosphatidylinositol 4,5-bisphosphate (PtdIns(4,5)P2) compartmentalization in synaptic boutons. There it acts at the periactive zone to provide the low Ca(2+) levels required to initiate Calcineurin activation and upregulate PtdIns(4,5)P2. Conversely PtdIns(4,5)P2 enhances fwe Ca(2+) channel-activity, establishing a positive feedback loop that induces PtdIns(4,5)P2 microdomain at the periactive zone. These microdomains trigger bulk membrane invagination (i.e. ADBE) by triggering actin polymerization while also promoting localization of fwe to bulk endosomes, thereby removing the ADBE trigger to reduce endocytosis and prevent excess membrane uptake. PtdIns(4,5)P2 then promotes SV reformation from the bulk endosomes, to coordinate ADBE and subsequent SV reformation. Different combinations of the flower isoforms at the cell membrane are also required for the identification and elimination of suboptimal or supernumerary cells during development, regeneration, and adulthood. Required for the recognition and elimination of unfit cells in the developing wing during cell competition. In the developing pupal retina, mediates the elimination of unwanted postmitotic neurons, including supernumerary photoreceptor neurons that form at the periphery of the retina and are contained within incomplete ommatidia units. Also required for efficient elimination and replacement of old neurons by newly generated neurons during regeneration in the adult brain following mechanical injury. Downstream of the flower fitness fingerprints, cells identified as unwanted or unfit are eliminated via apoptosis through the expression of ahuizotl (azot). However, the cells marked for elimination by the flower isoforms only undergo apoptosis if additional thresholds are met; (1) their neighboring fit/healthy cells express different levels of the fwe isoforms, and (2) the levels of the protective signal SPARC expressed by the loser or unwanted cells are unable to inhibit caspase activation. These additional thresholds for flower-mediated apoptosis, allows useful cells to recover from transient and limited stress before they are unnecessarily eliminated. Functions with dally and magu in a mechanism of scaling, which utilises apoptosis to ensure that the dpp morphogen gradient, which mediates organ growth, remains proportional to the size of the growing wing. In this mechanism, fwe represses dally- and Magu-dependent activity in expanding the gradient, and dally/Magu inhibits fwe-dependent apoptosis to keep cell death rate low. When the levels of these different proteins are optimally regulated the gradient correctly scales with organ growth but when this fails, fwe-mediated apoptosis is activated to trim the developing tissue to match the correct size of the gradient. The protein is Calcium channel flower of Drosophila grimshawi (Hawaiian fruit fly).